The following is an 88-amino-acid chain: Acyl-CoA-binding domain-containing protein 7 (88 aa).

Residues 3–88 (LQADFDQAAQ…ARELIEKYGI (86 aa)) form the ACB domain. An acyl-CoA is bound by residues Arg15, 30-34 (YGLYK), Lys56, and Tyr75.

It belongs to the ACBD7 family.

Binds medium- and long-chain acyl-CoA esters. This Mus musculus (Mouse) protein is Acyl-CoA-binding domain-containing protein 7 (Acbd7).